The sequence spans 428 residues: Serine--tRNA ligase (428 aa).

235–237 (TAE) serves as a coordination point for L-serine. ATP is bound at residue 266-268 (RSE). Position 289 (glutamate 289) interacts with L-serine. ATP is bound at residue 353–356 (EISS). Position 389 (serine 389) interacts with L-serine.

Belongs to the class-II aminoacyl-tRNA synthetase family. Type-1 seryl-tRNA synthetase subfamily. Homodimer. The tRNA molecule binds across the dimer.

It is found in the cytoplasm. The catalysed reaction is tRNA(Ser) + L-serine + ATP = L-seryl-tRNA(Ser) + AMP + diphosphate + H(+). It carries out the reaction tRNA(Sec) + L-serine + ATP = L-seryl-tRNA(Sec) + AMP + diphosphate + H(+). The protein operates within aminoacyl-tRNA biosynthesis; selenocysteinyl-tRNA(Sec) biosynthesis; L-seryl-tRNA(Sec) from L-serine and tRNA(Sec): step 1/1. Catalyzes the attachment of serine to tRNA(Ser). Is also able to aminoacylate tRNA(Sec) with serine, to form the misacylated tRNA L-seryl-tRNA(Sec), which will be further converted into selenocysteinyl-tRNA(Sec). The chain is Serine--tRNA ligase from Shewanella frigidimarina (strain NCIMB 400).